A 576-amino-acid polypeptide reads, in one-letter code: Proline--tRNA ligase (576 aa).

Belongs to the class-II aminoacyl-tRNA synthetase family. ProS type 1 subfamily. Homodimer.

The protein resides in the cytoplasm. It carries out the reaction tRNA(Pro) + L-proline + ATP = L-prolyl-tRNA(Pro) + AMP + diphosphate. Its function is as follows. Catalyzes the attachment of proline to tRNA(Pro) in a two-step reaction: proline is first activated by ATP to form Pro-AMP and then transferred to the acceptor end of tRNA(Pro). As ProRS can inadvertently accommodate and process non-cognate amino acids such as alanine and cysteine, to avoid such errors it has two additional distinct editing activities against alanine. One activity is designated as 'pretransfer' editing and involves the tRNA(Pro)-independent hydrolysis of activated Ala-AMP. The other activity is designated 'posttransfer' editing and involves deacylation of mischarged Ala-tRNA(Pro). The misacylated Cys-tRNA(Pro) is not edited by ProRS. The sequence is that of Proline--tRNA ligase from Finegoldia magna (strain ATCC 29328 / DSM 20472 / WAL 2508) (Peptostreptococcus magnus).